A 346-amino-acid chain; its full sequence is NADH-ubiquinone oxidoreductase chain 2 (346 aa).

A run of 10 helical transmembrane segments spans residues proline 3–serine 23, histidine 25–methionine 45, serine 67–methionine 87, methionine 96–proline 116, isoleucine 122–leucine 142, isoleucine 145–glycine 165, threonine 200–alanine 220, isoleucine 238–glycine 258, asparagine 273–methionine 293, and phenylalanine 324–valine 344.

It belongs to the complex I subunit 2 family. As to quaternary structure, core subunit of respiratory chain NADH dehydrogenase (Complex I) which is composed of 45 different subunits. Interacts with TMEM242.

It is found in the mitochondrion inner membrane. The catalysed reaction is a ubiquinone + NADH + 5 H(+)(in) = a ubiquinol + NAD(+) + 4 H(+)(out). Core subunit of the mitochondrial membrane respiratory chain NADH dehydrogenase (Complex I) which catalyzes electron transfer from NADH through the respiratory chain, using ubiquinone as an electron acceptor. Essential for the catalytic activity and assembly of complex I. The chain is NADH-ubiquinone oxidoreductase chain 2 from Bos mutus grunniens (Wild yak).